We begin with the raw amino-acid sequence, 514 residues long: 2,3-bisphosphoglycerate-independent phosphoglycerate mutase (514 aa).

Mn(2+) contacts are provided by Asp14 and Ser64. Ser64 serves as the catalytic Phosphoserine intermediate. Residues His125, 155–156 (RD), Arg187, Arg193, 263–266 (RADR), and Lys336 contribute to the substrate site. Mn(2+) is bound by residues Asp403, His407, Asp444, His445, and His463.

The protein belongs to the BPG-independent phosphoglycerate mutase family. As to quaternary structure, monomer. Mn(2+) is required as a cofactor.

It catalyses the reaction (2R)-2-phosphoglycerate = (2R)-3-phosphoglycerate. It functions in the pathway carbohydrate degradation; glycolysis; pyruvate from D-glyceraldehyde 3-phosphate: step 3/5. In terms of biological role, catalyzes the interconversion of 2-phosphoglycerate and 3-phosphoglycerate. In Shewanella pealeana (strain ATCC 700345 / ANG-SQ1), this protein is 2,3-bisphosphoglycerate-independent phosphoglycerate mutase.